The chain runs to 124 residues: Large ribosomal subunit protein bL12 (124 aa).

Belongs to the bacterial ribosomal protein bL12 family. In terms of assembly, homodimer. Part of the ribosomal stalk of the 50S ribosomal subunit. Forms a multimeric L10(L12)X complex, where L10 forms an elongated spine to which 2 to 4 L12 dimers bind in a sequential fashion. Binds GTP-bound translation factors.

In terms of biological role, forms part of the ribosomal stalk which helps the ribosome interact with GTP-bound translation factors. Is thus essential for accurate translation. This chain is Large ribosomal subunit protein bL12, found in Vesicomyosocius okutanii subsp. Calyptogena okutanii (strain HA).